Here is a 468-residue protein sequence, read N- to C-terminus: UDP-N-acetylmuramate--L-alanine ligase (468 aa).

An ATP-binding site is contributed by 116-122 (GTHGKTT).

It belongs to the MurCDEF family.

Its subcellular location is the cytoplasm. It carries out the reaction UDP-N-acetyl-alpha-D-muramate + L-alanine + ATP = UDP-N-acetyl-alpha-D-muramoyl-L-alanine + ADP + phosphate + H(+). The protein operates within cell wall biogenesis; peptidoglycan biosynthesis. Its function is as follows. Cell wall formation. The chain is UDP-N-acetylmuramate--L-alanine ligase from Fusobacterium nucleatum subsp. nucleatum (strain ATCC 25586 / DSM 15643 / BCRC 10681 / CIP 101130 / JCM 8532 / KCTC 2640 / LMG 13131 / VPI 4355).